A 179-amino-acid chain; its full sequence is Large ribosomal subunit protein uL5 (179 aa).

It belongs to the universal ribosomal protein uL5 family. In terms of assembly, part of the 50S ribosomal subunit; part of the 5S rRNA/L5/L18/L25 subcomplex. Contacts the 5S rRNA and the P site tRNA. Forms a bridge to the 30S subunit in the 70S ribosome.

Functionally, this is one of the proteins that bind and probably mediate the attachment of the 5S RNA into the large ribosomal subunit, where it forms part of the central protuberance. In the 70S ribosome it contacts protein S13 of the 30S subunit (bridge B1b), connecting the 2 subunits; this bridge is implicated in subunit movement. Contacts the P site tRNA; the 5S rRNA and some of its associated proteins might help stabilize positioning of ribosome-bound tRNAs. The sequence is that of Large ribosomal subunit protein uL5 from Saccharophagus degradans (strain 2-40 / ATCC 43961 / DSM 17024).